We begin with the raw amino-acid sequence, 443 residues long: Postreplication repair E3 ubiquitin-protein ligase rad18 (443 aa).

The RING-type zinc finger occupies 30 to 68 (CQVCKDFFDNPVITSCSHTFCSLCIRRCLSTEGKCPTCR). The disordered stretch occupies residues 106-157 (GTDDSGDLAAEEPASKKRKIEPNAIVGTDGLPEEGIRTRSQSRGASRQPQAT). A compositionally biased stretch (polar residues) spans 143 to 157 (TRSQSRGASRQPQAT). The segment at 175–202 (LVPCPVCGRRMKEEAVFRHLDSCTGTAE) adopts a UBZ4-type zinc-finger fold. Positions 178, 181, 193, and 197 each coordinate Zn(2+). Residues 239–273 (LKDTVLRKKLKDLGIPNWGPRALLQRRHTEWLNLW) enclose the SAP domain. Composition is skewed to polar residues over residues 350-363 (IPNA…TPRS) and 431-443 (PISS…KTPH). Positions 350–443 (IPNASQANSD…SSASTHKTPH (94 aa)) are disordered.

This sequence belongs to the RAD18 family. Interacts with E2 UBC2, forming a complex with ubiquitin ligase activity.

Its subcellular location is the nucleus. The catalysed reaction is S-ubiquitinyl-[E2 ubiquitin-conjugating enzyme]-L-cysteine + [acceptor protein]-L-lysine = [E2 ubiquitin-conjugating enzyme]-L-cysteine + N(6)-ubiquitinyl-[acceptor protein]-L-lysine.. Its pathway is protein modification; protein ubiquitination. Its function is as follows. E3 RING-finger protein, member of the UBC2/RAD6 epistasis group. Associates to the E2 ubiquitin conjugating enzyme UBC2/RAD6 to form the UBC2-RAD18 ubiquitin ligase complex involved in postreplicative repair (PRR) of damaged DNA. The polypeptide is Postreplication repair E3 ubiquitin-protein ligase rad18 (uvsH) (Emericella nidulans (strain FGSC A4 / ATCC 38163 / CBS 112.46 / NRRL 194 / M139) (Aspergillus nidulans)).